A 279-amino-acid polypeptide reads, in one-letter code: Bifunctional protein FolD (279 aa).

NADP(+) is bound by residues 159–161 (GRS), Ser184, and Thr225.

The protein belongs to the tetrahydrofolate dehydrogenase/cyclohydrolase family. Homodimer.

The enzyme catalyses (6R)-5,10-methylene-5,6,7,8-tetrahydrofolate + NADP(+) = (6R)-5,10-methenyltetrahydrofolate + NADPH. It carries out the reaction (6R)-5,10-methenyltetrahydrofolate + H2O = (6R)-10-formyltetrahydrofolate + H(+). The protein operates within one-carbon metabolism; tetrahydrofolate interconversion. Catalyzes the oxidation of 5,10-methylenetetrahydrofolate to 5,10-methenyltetrahydrofolate and then the hydrolysis of 5,10-methenyltetrahydrofolate to 10-formyltetrahydrofolate. The polypeptide is Bifunctional protein FolD (Methanospirillum hungatei JF-1 (strain ATCC 27890 / DSM 864 / NBRC 100397 / JF-1)).